An 824-amino-acid chain; its full sequence is Neuronal PAS domain-containing protein 2 (824 aa).

Over residues M1 to K10 the composition is skewed to basic and acidic residues. Positions M1–R21 are disordered. The tract at residues M1–E61 is sufficient for heterodimer formation with BMAL1, E-box binding and for the effect of NADPH. The bHLH domain maps to A9–H59. A PAS 1 domain is found at N82–T152. Heme b-binding residues include H119 and H171. Positions F237–G307 constitute a PAS 2 domain. Residues S311–A354 form the PAC domain. Disordered stretches follow at residues E367 to A437, S556 to S667, Q681 to K704, and P739 to R824. Over residues A378–Q390 the composition is skewed to basic and acidic residues. Residues T421–T431 are compositionally biased toward polar residues. Residues Q559–Q576 are compositionally biased toward low complexity. The segment covering G587–G610 has biased composition (polar residues). A compositionally biased stretch (low complexity) spans M614–S636. Composition is skewed to polar residues over residues L645 to P664 and S694 to K704. Residues P739–Q760 show a composition bias toward low complexity. The span at Q766 to G789 shows a compositional bias: polar residues. Residues P794–R805 are compositionally biased toward pro residues. Low complexity predominate over residues R809 to R824.

As to quaternary structure, component of the circadian clock oscillator which includes the CRY proteins, CLOCK or NPAS2, BMAL1 or BMAL2, CSNK1D and/or CSNK1E, TIMELESS and the PER proteins. Efficient DNA binding requires dimerization with another bHLH protein. Forms a heterodimer with BMAL1 and this heterodimerization is required for E-box-dependent transactivation. Interacts with NCOA3, KAT2B, CREBBP and EP300. The cofactor is heme.

Its subcellular location is the nucleus. Carbon monoxide (CO) and the redox state of the cell can modulate the transcriptional activity of the NPAS2-BMAL1 heterodimer. NADH and NADPH enhance the DNA-binding activity of the heterodimer whereas CO binds the heme group in NPAS2 and inhibits the DNA-binding activity of the heterodimer. Its function is as follows. Transcriptional activator which forms a core component of the circadian clock. The circadian clock, an internal time-keeping system, regulates various physiological processes through the generation of approximately 24 hour circadian rhythms in gene expression, which are translated into rhythms in metabolism and behavior. It is derived from the Latin roots 'circa' (about) and 'diem' (day) and acts as an important regulator of a wide array of physiological functions including metabolism, sleep, body temperature, blood pressure, endocrine, immune, cardiovascular, and renal function. Consists of two major components: the central clock, residing in the suprachiasmatic nucleus (SCN) of the brain, and the peripheral clocks that are present in nearly every tissue and organ system. Both the central and peripheral clocks can be reset by environmental cues, also known as Zeitgebers (German for 'timegivers'). The predominant Zeitgeber for the central clock is light, which is sensed by retina and signals directly to the SCN. The central clock entrains the peripheral clocks through neuronal and hormonal signals, body temperature and feeding-related cues, aligning all clocks with the external light/dark cycle. Circadian rhythms allow an organism to achieve temporal homeostasis with its environment at the molecular level by regulating gene expression to create a peak of protein expression once every 24 hours to control when a particular physiological process is most active with respect to the solar day. Transcription and translation of core clock components (CLOCK, NPAS2, BMAL1, BMAL2, PER1, PER2, PER3, CRY1 and CRY2) plays a critical role in rhythm generation, whereas delays imposed by post-translational modifications (PTMs) are important for determining the period (tau) of the rhythms (tau refers to the period of a rhythm and is the length, in time, of one complete cycle). A diurnal rhythm is synchronized with the day/night cycle, while the ultradian and infradian rhythms have a period shorter and longer than 24 hours, respectively. Disruptions in the circadian rhythms contribute to the pathology of cardiovascular diseases, cancer, metabolic syndromes and aging. A transcription/translation feedback loop (TTFL) forms the core of the molecular circadian clock mechanism. Transcription factors, CLOCK or NPAS2 and BMAL1 or BMAL2, form the positive limb of the feedback loop, act in the form of a heterodimer and activate the transcription of core clock genes and clock-controlled genes (involved in key metabolic processes), harboring E-box elements (5'-CACGTG-3') within their promoters. The core clock genes: PER1/2/3 and CRY1/2 which are transcriptional repressors form the negative limb of the feedback loop and interact with the CLOCK|NPAS2-BMAL1|BMAL2 heterodimer inhibiting its activity and thereby negatively regulating their own expression. This heterodimer also activates nuclear receptors NR1D1/2 and RORA/B/G, which form a second feedback loop and which activate and repress BMAL1 transcription, respectively. The NPAS2-BMAL1 heterodimer positively regulates the expression of MAOA, F7 and LDHA and modulates the circadian rhythm of daytime contrast sensitivity by regulating the rhythmic expression of adenylate cyclase type 1 (ADCY1) in the retina. NPAS2 plays an important role in sleep homeostasis and in maintaining circadian behaviors in normal light/dark and feeding conditions and in the effective synchronization of feeding behavior with scheduled food availability. Regulates the gene transcription of key metabolic pathways in the liver and is involved in DNA damage response by regulating several cell cycle and DNA repair genes. Controls the circadian rhythm of NR0B2 expression by binding rhythmically to its promoter. Mediates the diurnal variation in the expression of GABARA1 receptor in the brain and contributes to the regulation of anxiety-like behaviors and GABAergic neurotransmission in the ventral striatum. This Homo sapiens (Human) protein is Neuronal PAS domain-containing protein 2 (NPAS2).